The primary structure comprises 194 residues: uncharacterized protein (194 aa).

The HTH tetR-type domain occupies 6–66 (EFDTALVLHR…SAVKSYLEGK (61 aa)). Residues 29-48 (SLQDLLSHLGIARQSLYDTY) constitute a DNA-binding region (H-T-H motif).

This is an uncharacterized protein from Bacillus subtilis (strain 168).